Here is a 209-residue protein sequence, read N- to C-terminus: MVEPREQFFQDLLSAVDKQMDTVKNDIIDVMKEKTSFLVSFENFMERYDTMEKNIQDLQNKYEEMANNLVAVMADTKIQLGAIIAQLEIIMVNGTPLPAKKTTMKDATSLPPPNPNNEQSVFTNGSPTSGKIGETVKKNLTNAMFFTRSEWASSEPFRQKFLTPEIQAILDEQFANKTGIERLHAEGLYMWRTQFSDEQKKMVKEMMKK.

Residues 39 to 75 (VSFENFMERYDTMEKNIQDLQNKYEEMANNLVAVMAD) adopt a coiled-coil conformation. The interval 103–131 (TMKDATSLPPPNPNNEQSVFTNGSPTSGK) is disordered. Polar residues predominate over residues 116 to 129 (NNEQSVFTNGSPTS).

This sequence belongs to the asfivirus K205R family.

The protein resides in the host cytoplasm. Its function is as follows. Induces host endoplasmic reticulum stress and consequently activates autophagy and NF-kappa-B signaling pathway. In turn, may induce autophagy-mediated STING1 degradation and innate immune evasion. This is an uncharacterized protein from Ornithodoros (relapsing fever ticks).